Consider the following 407-residue polypeptide: Argininosuccinate synthase (407 aa).

Residues 11–19 (AYSGGLDTS) and alanine 38 each bind ATP. L-citrulline is bound by residues tyrosine 89 and serine 94. ATP is bound at residue glycine 119. The L-aspartate site is built by threonine 121, asparagine 125, and aspartate 126. Asparagine 125 contributes to the L-citrulline binding site. Positions 129, 180, 189, 265, and 277 each coordinate L-citrulline.

The protein belongs to the argininosuccinate synthase family. Type 1 subfamily. Homotetramer.

The protein resides in the cytoplasm. The enzyme catalyses L-citrulline + L-aspartate + ATP = 2-(N(omega)-L-arginino)succinate + AMP + diphosphate + H(+). Its pathway is amino-acid biosynthesis; L-arginine biosynthesis; L-arginine from L-ornithine and carbamoyl phosphate: step 2/3. This is Argininosuccinate synthase from Magnetococcus marinus (strain ATCC BAA-1437 / JCM 17883 / MC-1).